Consider the following 173-residue polypeptide: Translationally-controlled tumor protein homolog (173 aa).

In terms of domain architecture, TCTP spans 1-173 (MKVYRDLYSN…LKDGLVEERY (173 aa)).

It belongs to the TCTP family.

It localises to the cytoplasm. Involved in calcium binding and microtubule stabilization. This Theileria annulata protein is Translationally-controlled tumor protein homolog (TCTP).